The primary structure comprises 947 residues: Valine--tRNA ligase (947 aa).

The 'HIGH' region motif lies at 45 to 55 (PNVTGSLHMGH). The 'KMSKS' region signature appears at 591-595 (KMSKS). Lysine 594 is an ATP binding site.

It belongs to the class-I aminoacyl-tRNA synthetase family. ValS type 1 subfamily. Monomer.

It is found in the cytoplasm. It carries out the reaction tRNA(Val) + L-valine + ATP = L-valyl-tRNA(Val) + AMP + diphosphate. Functionally, catalyzes the attachment of valine to tRNA(Val). As ValRS can inadvertently accommodate and process structurally similar amino acids such as threonine, to avoid such errors, it has a 'posttransfer' editing activity that hydrolyzes mischarged Thr-tRNA(Val) in a tRNA-dependent manner. In Rhizobium meliloti (strain 1021) (Ensifer meliloti), this protein is Valine--tRNA ligase.